A 389-amino-acid polypeptide reads, in one-letter code: Na(+)/H(+) antiporter NhaA (389 aa).

The next 11 helical transmembrane spans lie at 24 to 44, 56 to 76, 94 to 114, 122 to 142, 152 to 172, 176 to 196, 216 to 236, 259 to 279, 291 to 311, 326 to 346, and 363 to 383; these read ILLILCTILSLSIANSLAGPA, LSIEHWVNDALMAVFFLFVGL, LLPIFAAIGGIGVPALIHYTL, AGTGIPMATDIAFALGVLALL, VFLTALAVMDDLGAIIVIAMF, QFSLVYLLSALAVFGLLLVLN, FLMLKSGVHATIAGVLLAFAI, PVAFIILPIFALANTGIVIGS, LGIIGGLVFGKPLGIALLSFV, WTHIVGAGILGGIGFTMSIFI, and MAILMASVAAGGLGFLWLSFF.

Belongs to the NhaA Na(+)/H(+) (TC 2.A.33) antiporter family.

It localises to the cell inner membrane. The enzyme catalyses Na(+)(in) + 2 H(+)(out) = Na(+)(out) + 2 H(+)(in). In terms of biological role, na(+)/H(+) antiporter that extrudes sodium in exchange for external protons. This chain is Na(+)/H(+) antiporter NhaA, found in Dechloromonas aromatica (strain RCB).